A 297-amino-acid chain; its full sequence is Homoserine kinase (297 aa).

Position 82-92 (82-92) interacts with ATP; it reads PLTRGLGSSAS.

It belongs to the GHMP kinase family. Homoserine kinase subfamily.

It is found in the cytoplasm. It catalyses the reaction L-homoserine + ATP = O-phospho-L-homoserine + ADP + H(+). The protein operates within amino-acid biosynthesis; L-threonine biosynthesis; L-threonine from L-aspartate: step 4/5. In terms of biological role, catalyzes the ATP-dependent phosphorylation of L-homoserine to L-homoserine phosphate. This chain is Homoserine kinase, found in Bacillus anthracis (strain CDC 684 / NRRL 3495).